We begin with the raw amino-acid sequence, 341 residues long: Glyceraldehyde-3-phosphate dehydrogenase (341 aa).

Residues Thr-11–Ile-12 and Gly-109 each bind NAD(+). Residue Ser-138 to Asn-140 coordinates D-glyceraldehyde 3-phosphate. The Nucleophile role is filled by Cys-139. Arg-167 lines the NAD(+) pocket. D-glyceraldehyde 3-phosphate is bound by residues Thr-169 and His-192–Ala-193. Gln-299 is an NAD(+) binding site.

The protein belongs to the glyceraldehyde-3-phosphate dehydrogenase family. Homotetramer.

It localises to the cytoplasm. It carries out the reaction D-glyceraldehyde 3-phosphate + phosphate + NADP(+) = (2R)-3-phospho-glyceroyl phosphate + NADPH + H(+). It catalyses the reaction D-glyceraldehyde 3-phosphate + phosphate + NAD(+) = (2R)-3-phospho-glyceroyl phosphate + NADH + H(+). The protein operates within carbohydrate degradation; glycolysis; pyruvate from D-glyceraldehyde 3-phosphate: step 1/5. The polypeptide is Glyceraldehyde-3-phosphate dehydrogenase (Picrophilus torridus (strain ATCC 700027 / DSM 9790 / JCM 10055 / NBRC 100828 / KAW 2/3)).